A 527-amino-acid chain; its full sequence is Bifunctional dihydrofolate reductase-thymidylate synthase (527 aa).

The 211-residue stretch at 28 to 238 folds into the DHFR domain; sequence PFSVVVASDE…KKYQFEKLVP (211 aa). Val32 contacts substrate. Residues Ala34 and 40–46 contribute to the NADP(+) site; that span reads GIGDGGT. Asp54 provides a ligand contact to substrate. Residues 84–86 and 105–108 contribute to the NADP(+) site; these read RKT and LSRS. 3 residues coordinate substrate: Ile160, Tyr166, and Thr184. Position 161-168 (161-168) interacts with NADP(+); that stretch reads GGGTIYKQ. Residues 243–527 form a thymidylate synthase region; it reads EEQYLNLVGR…YPVISMEMAV (285 aa). A dUMP-binding site is contributed by Arg263. Residue Cys409 is part of the active site. Residues His410, 428-432, Asn440, and 470-472 contribute to the dUMP site; these read QRSCD and HVY.

The protein in the N-terminal section; belongs to the dihydrofolate reductase family. In the C-terminal section; belongs to the thymidylate synthase family. Homodimer.

It catalyses the reaction dUMP + (6R)-5,10-methylene-5,6,7,8-tetrahydrofolate = 7,8-dihydrofolate + dTMP. The enzyme catalyses (6S)-5,6,7,8-tetrahydrofolate + NADP(+) = 7,8-dihydrofolate + NADPH + H(+). Its pathway is pyrimidine metabolism; dTTP biosynthesis. The protein operates within cofactor biosynthesis; tetrahydrofolate biosynthesis; 5,6,7,8-tetrahydrofolate from 7,8-dihydrofolate: step 1/1. Bifunctional enzyme. Involved in de novo dTMP biosynthesis. Key enzyme in folate metabolism. Catalyzes an essential reaction for de novo glycine and purine synthesis, DNA precursor synthesis, and for the conversion of dUMP to dTMP. This is Bifunctional dihydrofolate reductase-thymidylate synthase from Trypanosoma brucei brucei.